The sequence spans 354 residues: Lysophosphatidic acid receptor 3 (354 aa).

Over methionine 1–valine 31 the chain is Extracellular. An N-linked (GlcNAc...) asparagine glycan is attached at asparagine 15. Residues isoleucine 32–isoleucine 52 form a helical membrane-spanning segment. Topologically, residues alanine 53–tyrosine 67 are cytoplasmic. Residues leucine 68–phenylalanine 88 form a helical membrane-spanning segment. The Extracellular segment spans residues asparagine 89–arginine 101. A helical transmembrane segment spans residues tryptophan 102–alanine 124. Residues valine 125 to threonine 146 are Cytoplasmic-facing. The chain crosses the membrane as a helical span at residues leucine 147–tryptophan 167. Residues asparagine 168 to serine 186 lie on the Extracellular side of the membrane. Asparagine 172 carries N-linked (GlcNAc...) asparagine glycosylation. The helical transmembrane segment at tyrosine 187–valine 207 threads the bilayer. The Cytoplasmic segment spans residues arginine 208 to threonine 240. The helical transmembrane segment at valine 241 to leucine 261 threads the bilayer. Over aspartate 262–arginine 276 the chain is Extracellular. The helical transmembrane segment at tryptophan 277 to tyrosine 295 threads the bilayer. At lysine 296–serine 354 the chain is on the cytoplasmic side. Cysteine 309 is lipidated: S-palmitoyl cysteine. Residues serine 315–serine 354 are disordered. Residues arginine 323–serine 354 show a composition bias toward polar residues.

The protein belongs to the G-protein coupled receptor 1 family. As to expression, most abundantly expressed in testes, kidney, and lung, with moderate levels in small intestine, and low levels in heart, stomach, spleen, and adult and perinatal brain. Little or no expression in embryonic brain, liver, or thymus.

The protein localises to the cell membrane. Its function is as follows. Receptor for lysophosphatidic acid (LPA), a mediator of diverse cellular activities. Seems to be coupled to the G(i)/G(o) and G(q) families of heteromeric G proteins. The chain is Lysophosphatidic acid receptor 3 (Lpar3) from Mus musculus (Mouse).